Here is a 967-residue protein sequence, read N- to C-terminus: Phosphoenolpyruvate carboxylase (967 aa).

Phosphoserine is present on S11. Catalysis depends on residues H172 and K601.

Belongs to the PEPCase type 1 family. As to quaternary structure, homotetramer. Mg(2+) is required as a cofactor.

It localises to the cytoplasm. The catalysed reaction is oxaloacetate + phosphate = phosphoenolpyruvate + hydrogencarbonate. Its pathway is photosynthesis; C3 acid pathway. By light-reversible phosphorylation. Functionally, through the carboxylation of phosphoenolpyruvate (PEP) it forms oxaloacetate, a four-carbon dicarboxylic acid source for the tricarboxylic acid cycle. This is Phosphoenolpyruvate carboxylase (PPCA1) from Flaveria pringlei.